The primary structure comprises 955 residues: UPF0182 protein syc2310_c (955 aa).

Transmembrane regions (helical) follow at residues 12 to 32, 45 to 65, 85 to 105, 141 to 161, 163 to 183, 224 to 244, 263 to 283, 306 to 326, and 343 to 363; these read IAAI…TLWF, LAVQ…LIGG, LQLG…LALT, GSWP…LFLW, PWPL…LLTS, FDLW…YYLA, HLVR…WLAQ, LPLL…LFWQ, and AAIA…QLVV.

Belongs to the UPF0182 family.

It is found in the cell membrane. This chain is UPF0182 protein syc2310_c, found in Synechococcus sp. (strain ATCC 27144 / PCC 6301 / SAUG 1402/1) (Anacystis nidulans).